The following is a 426-amino-acid chain: PI-PLC X domain-containing protein At5g67130 (426 aa).

A signal peptide spans 1 to 28 (MSACINGLCRAVTVSLLLLLLSFSFSSA). Residues 76–232 (IINGLPFNKY…MVQENHRLLV (157 aa)) form the PI-PLC X-box domain. N-linked (GlcNAc...) asparagine glycans are attached at residues Asn151 and Asn255. The segment at 258–277 (GDPGVKRGSCPNRKESQPLN) is disordered. N-linked (GlcNAc...) asparagine glycosylation is present at Asn370. Ser404 carries GPI-anchor amidated serine lipidation. The propeptide at 405 to 426 (VAQLNNIVVFCFSLLPLLIFLL) is removed in mature form.

Its subcellular location is the cell membrane. The sequence is that of PI-PLC X domain-containing protein At5g67130 from Arabidopsis thaliana (Mouse-ear cress).